A 467-amino-acid chain; its full sequence is Bifunctional protein GlmU (467 aa).

Positions M1 to R229 are pyrophosphorylase. UDP-N-acetyl-alpha-D-glucosamine-binding positions include L8–G11, K22, Q72, G77–T78, S100–D102, G139, E154, N169, and N227. D102 contacts Mg(2+). N227 provides a ligand contact to Mg(2+). The linker stretch occupies residues L230–N250. Residues G251 to K467 form an N-acetyltransferase region. UDP-N-acetyl-alpha-D-glucosamine contacts are provided by R332 and K350. H362 (proton acceptor) is an active-site residue. UDP-N-acetyl-alpha-D-glucosamine-binding residues include Y365 and N376. Acetyl-CoA is bound by residues N385–Y386, S404, A422, and R439.

The protein in the N-terminal section; belongs to the N-acetylglucosamine-1-phosphate uridyltransferase family. It in the C-terminal section; belongs to the transferase hexapeptide repeat family. As to quaternary structure, homotrimer. The cofactor is Mg(2+).

It localises to the cytoplasm. The enzyme catalyses alpha-D-glucosamine 1-phosphate + acetyl-CoA = N-acetyl-alpha-D-glucosamine 1-phosphate + CoA + H(+). The catalysed reaction is N-acetyl-alpha-D-glucosamine 1-phosphate + UTP + H(+) = UDP-N-acetyl-alpha-D-glucosamine + diphosphate. It participates in nucleotide-sugar biosynthesis; UDP-N-acetyl-alpha-D-glucosamine biosynthesis; N-acetyl-alpha-D-glucosamine 1-phosphate from alpha-D-glucosamine 6-phosphate (route II): step 2/2. It functions in the pathway nucleotide-sugar biosynthesis; UDP-N-acetyl-alpha-D-glucosamine biosynthesis; UDP-N-acetyl-alpha-D-glucosamine from N-acetyl-alpha-D-glucosamine 1-phosphate: step 1/1. The protein operates within bacterial outer membrane biogenesis; LPS lipid A biosynthesis. In terms of biological role, catalyzes the last two sequential reactions in the de novo biosynthetic pathway for UDP-N-acetylglucosamine (UDP-GlcNAc). The C-terminal domain catalyzes the transfer of acetyl group from acetyl coenzyme A to glucosamine-1-phosphate (GlcN-1-P) to produce N-acetylglucosamine-1-phosphate (GlcNAc-1-P), which is converted into UDP-GlcNAc by the transfer of uridine 5-monophosphate (from uridine 5-triphosphate), a reaction catalyzed by the N-terminal domain. In Pediococcus pentosaceus (strain ATCC 25745 / CCUG 21536 / LMG 10740 / 183-1w), this protein is Bifunctional protein GlmU.